The following is a 1042-amino-acid chain: Elongation factor 3 (1042 aa).

HEAT repeat units lie at residues 9-46 (KVLM…DPDT), 86-124 (PYLV…TMNP), 167-204 (YRLP…LISN), 206-242 (DIDK…EVHA), 243-280 (STLS…LVED), and 289-327 (PKLI…VKEG). ABC transporter domains are found at residues 425-642 (EEGE…YQDI) and 668-994 (CRMR…EQEE). The ADP site is built by asparagine 704, glutamate 923, asparagine 926, and histidine 952. Residues 1009 to 1042 (KKAKKLTSSELRKKKKERMARRKKGEEVFSDEDD) are disordered. The segment covering 1020–1031 (RKKKKERMARRK) has biased composition (basic residues).

This sequence belongs to the ABC transporter superfamily. ABCF family. EF3 subfamily. In terms of assembly, monomer.

It localises to the cytoplasm. It catalyses the reaction ATP + H2O = ADP + phosphate + H(+). The protein operates within protein biosynthesis; polypeptide chain elongation. Functionally, ribosome-dependent ATPase that functions in cytoplasmic translation elongation. Required for the ATP-dependent release of deacylated tRNA from the ribosomal E-site during protein biosynthesis. Stimulates the eEF1A-dependent binding of aminoacyl-tRNA to the ribosomal A-site, which has reduced affinity for tRNA as long as the E-site is occupied. Assists translation termination by stimulating the release of nascent protein from the ribosome by release factors. This chain is Elongation factor 3 (TEF3), found in Pneumocystis carinii.